The sequence spans 169 residues: Cuticle protein 21 (169 aa).

6 consecutive repeat copies span residues 21 to 24, 27 to 30, 33 to 36, 39 to 42, 47 to 50, and 53 to 56. Residues 65–135 enclose the Chitin-binding type R&amp;R domain; the sequence is NPQYSYAYNV…KEAGAHPAPV (71 aa). Repeat copies occupy residues 140–143, 146–149, and 160–163.

Functionally, component of the cuticle of migratory locust which contains more than 100 different structural proteins. This Locusta migratoria (Migratory locust) protein is Cuticle protein 21 (ACP21).